A 196-amino-acid polypeptide reads, in one-letter code: Small ribosomal subunit protein uS4C (196 aa).

The S4 RNA-binding domain occupies 87-149 (CRLDNVVYRI…HRQNEMFSNN (63 aa)).

This sequence belongs to the universal ribosomal protein uS4 family. Part of the 30S ribosomal subunit. Contacts protein S5. The interaction surface between S4 and S5 is involved in control of translational fidelity.

In terms of biological role, one of the primary rRNA binding proteins, it binds directly to 16S rRNA where it nucleates assembly of the body of the 30S subunit. Functionally, with S5 and S12 plays an important role in translational accuracy. This Clostridium acetobutylicum (strain ATCC 824 / DSM 792 / JCM 1419 / IAM 19013 / LMG 5710 / NBRC 13948 / NRRL B-527 / VKM B-1787 / 2291 / W) protein is Small ribosomal subunit protein uS4C (rpsD3).